The chain runs to 520 residues: Keratin, type II cytoskeletal 72 (520 aa).

A head region spans residues 1–133 (MSRQLTLYPG…DPEIQKVRAQ (133 aa)). A coil 1A region spans residues 134–169 (EREQIKALNNKFASFIDKVRFLEQQNQVLETKWELL). The 314-residue stretch at 134 to 447 (EREQIKALNN…KLLESEESRM (314 aa)) folds into the IF rod domain. The tract at residues 170 to 188 (QQLDLNNSKRSLEPVHESY) is linker 1. Residues 189–280 (ISNLQKQLEI…VLFEGEIAQM (92 aa)) are coil 1B. A linker 12 region spans residues 281–304 (QSHISDTSVILSMDNNRQLDLDSI). The tract at residues 305 to 443 (LAEVRAQYEE…ATYRKLLESE (139 aa)) is coil 2. The tract at residues 444–520 (ESRMAGEYPN…SSGTTKKTSR (77 aa)) is tail. The interval 494-520 (KGSCGSELKDPPAKTSGSSGTTKKTSR) is disordered. The segment covering 507–520 (KTSGSSGTTKKTSR) has biased composition (low complexity).

This sequence belongs to the intermediate filament family. As to quaternary structure, heterotetramer of two type I and two type II keratins.

Its function is as follows. Has a role in hair formation. Specific component of keratin intermediate filaments in the inner root sheath (IRS) of the hair follicle. The sequence is that of Keratin, type II cytoskeletal 72 (Krt72) from Mus musculus (Mouse).